We begin with the raw amino-acid sequence, 81 residues long: Small ribosomal subunit protein bS16 (81 aa).

This sequence belongs to the bacterial ribosomal protein bS16 family.

The polypeptide is Small ribosomal subunit protein bS16 (Treponema denticola (strain ATCC 35405 / DSM 14222 / CIP 103919 / JCM 8153 / KCTC 15104)).